The sequence spans 269 residues: Eukaryotic translation initiation factor 3 subunit G-2 (269 aa).

Positions 189 to 267 constitute an RRM domain; it reads SAVRISNLSE…LILCVEWSKP (79 aa).

Belongs to the eIF-3 subunit G family. As to quaternary structure, component of the eukaryotic translation initiation factor 3 (eIF-3) complex. The eIF-3 complex interacts with pix.

The protein localises to the cytoplasm. Functionally, RNA-binding component of the eukaryotic translation initiation factor 3 (eIF-3) complex, which is involved in protein synthesis of a specialized repertoire of mRNAs and, together with other initiation factors, stimulates binding of mRNA and methionyl-tRNAi to the 40S ribosome. The eIF-3 complex specifically targets and initiates translation of a subset of mRNAs involved in cell proliferation. This subunit can bind 18S rRNA. This chain is Eukaryotic translation initiation factor 3 subunit G-2, found in Drosophila ananassae (Fruit fly).